Consider the following 783-residue polypeptide: uncharacterized protein (783 aa).

Residues 1–22 (MVNTRGYTTLPNVEEPANNSQD) form a disordered region. Residues 1–109 (MVNTRGYTTL…SKIGNVMVMR (109 aa)) are Cytoplasmic-facing. The helical; Signal-anchor for type II membrane protein transmembrane segment at 110–127 (RIFYIMMMSIIAALIIAS) threads the bilayer. At 128 to 783 (DRLPNGKARG…NLHGINTNEF (656 aa)) the chain is on the extracellular side. 2 N-linked (GlcNAc...) asparagine glycosylation sites follow: asparagine 139 and asparagine 213. Residues 241–333 (HNGQLNNIPV…GTGDALTPEW (93 aa)) form the PA domain. Asparagine 529 carries N-linked (GlcNAc...) asparagine glycosylation.

The protein localises to the cell membrane. This is an uncharacterized protein from Saccharomyces cerevisiae (strain ATCC 204508 / S288c) (Baker's yeast).